We begin with the raw amino-acid sequence, 105 residues long: Large ribosomal subunit protein uL24 (105 aa).

Belongs to the universal ribosomal protein uL24 family. Part of the 50S ribosomal subunit.

In terms of biological role, one of two assembly initiator proteins, it binds directly to the 5'-end of the 23S rRNA, where it nucleates assembly of the 50S subunit. Functionally, one of the proteins that surrounds the polypeptide exit tunnel on the outside of the subunit. This chain is Large ribosomal subunit protein uL24, found in Novosphingobium aromaticivorans (strain ATCC 700278 / DSM 12444 / CCUG 56034 / CIP 105152 / NBRC 16084 / F199).